Consider the following 464-residue polypeptide: Cytochrome P450 85A1 (464 aa).

Residues 2–22 (AFFLIFLSSFFGLCIFCTALL) traverse the membrane as a helical segment. C414 provides a ligand contact to heme.

The protein belongs to the cytochrome P450 family. It depends on heme as a cofactor. Expressed in sub-meristematic regions of shoot and root apexes, in zones undergoing lateral root formation, in fruits, and in all flower parts, with a high expression in young flower buds and at the joint in the pedicel.

It is found in the membrane. It carries out the reaction 6-deoxocastasterone + reduced [NADPH--hemoprotein reductase] + O2 = 6alpha-hydroxycastasterone + oxidized [NADPH--hemoprotein reductase] + H2O + H(+). The enzyme catalyses 6alpha-hydroxycastasterone + reduced [NADPH--hemoprotein reductase] + O2 = castasterone + oxidized [NADPH--hemoprotein reductase] + 2 H2O + H(+). The catalysed reaction is 6-deoxocastasterone + 2 reduced [NADPH--hemoprotein reductase] + 2 O2 = castasterone + 2 oxidized [NADPH--hemoprotein reductase] + 3 H2O + 2 H(+). It functions in the pathway plant hormone biosynthesis; brassinosteroid biosynthesis. Functionally, catalyzes the C6-oxidation step in brassinosteroids biosynthesis. Converts 6-deoxocastasterone (6-deoxoCS) to castasterone (CS). May also convert 6-deoxoteasterone (6-deoxoTE) to teasterone (TE), 3-dehydro-6-deoxoteasterone (6-deoxo3DT, 6-deoxo3DHT) to 3-dehydroteasterone (3DT, 3-DHT), and 6-deoxotyphasterol (6-deoxoTY) to typhasterol (TY), but not castasterone (CS) to brassinolide (BL). The chain is Cytochrome P450 85A1 from Solanum lycopersicum (Tomato).